Consider the following 98-residue polypeptide: Small ribosomal subunit protein uS19 (98 aa).

Disordered regions lie at residues 1–30 (MARS…KKSV) and 78–98 (RTFH…PAKK). Residues 9-24 (PFADKHLTKKVEDANK) show a composition bias toward basic and acidic residues.

Belongs to the universal ribosomal protein uS19 family.

In terms of biological role, protein S19 forms a complex with S13 that binds strongly to the 16S ribosomal RNA. The sequence is that of Small ribosomal subunit protein uS19 from Anaeromyxobacter dehalogenans (strain 2CP-1 / ATCC BAA-258).